The following is a 30-amino-acid chain: V-type proton ATPase catalytic subunit A isoform 1 (30 aa).

It belongs to the ATPase alpha/beta chains family. In terms of assembly, V-ATPase is a heteromultimeric enzyme composed of a peripheral catalytic V1 complex (main components: subunits A, B, C, D, E, and F) attached to an integral membrane V0 proton pore complex (main component: the proteolipid protein).

The enzyme catalyses ATP + H2O + 4 H(+)(in) = ADP + phosphate + 5 H(+)(out). Catalytic subunit of the peripheral V1 complex of vacuolar ATPase. V-ATPase vacuolar ATPase is responsible for acidifying a variety of intracellular compartments in eukaryotic cells. In Equisetum arvense (Field horsetail), this protein is V-type proton ATPase catalytic subunit A isoform 1.